A 396-amino-acid polypeptide reads, in one-letter code: G-protein coupled receptor 84 (396 aa).

Topologically, residues 1–26 are extracellular; the sequence is MWNSSDANFSCYHESVLGYRYVAVSW. 2 N-linked (GlcNAc...) asparagine glycosylation sites follow: Asn-3 and Asn-8. The helical transmembrane segment at 27-47 threads the bilayer; the sequence is GVVVAVTGTVGNVLTLLALAI. Topologically, residues 48–57 are cytoplasmic; that stretch reads QPKLRTRFNL. Residues 58 to 78 form a helical membrane-spanning segment; sequence LIANLTLADLLYCTLLQPFSV. Over 79 to 94 the chain is Extracellular; that stretch reads DTYLHLHWRTGATFCR. Residues 95-115 form a helical membrane-spanning segment; it reads VFGLLLFASNSVSILTLCLIA. Residues 116 to 144 lie on the Cytoplasmic side of the membrane; it reads LGRYLLIAHPKLFPQVFSAKGIVLALVST. Residues 145–165 traverse the membrane as a helical segment; sequence WVVGVASFAPLWPIYILVPVV. The Extracellular segment spans residues 166-180; that stretch reads CTCSFDRIRGRPYTT. A helical membrane pass occupies residues 181 to 201; the sequence is ILMGIYFVLGLSSVGIFYCLI. Residues 202-320 are Cytoplasmic-facing; that stretch reads HRQVKRAAQA…SSEFGKVTRM (119 aa). Phosphoserine is present on residues Ser-221 and Ser-224. The disordered stretch occupies residues 244 to 311; it reads RLASGGPSEG…KGARRAPDSS (68 aa). A compositionally biased stretch (low complexity) spans 247 to 260; the sequence is SGGPSEGISSEPVS. Phosphothreonine is present on residues Thr-263 and Thr-264. The chain crosses the membrane as a helical span at residues 321–341; sequence CFAVFLCFALSYIPFLLLNIL. The Extracellular portion of the chain corresponds to 342–352; the sequence is DARVQAPRVVH. Residues 353 to 373 form a helical membrane-spanning segment; it reads MLAANLTWLNGCINPVLYAAM. Residues 374 to 396 are Cytoplasmic-facing; the sequence is NRQFRQAYGSILKRGPRSFHRLH.

Belongs to the G-protein coupled receptor 1 family. As to quaternary structure, interacts with ARRB2 and ARR3. Post-translationally, phosphorylated by a subset of GPR84-activating ligands. Constitutively phosphorylated at Ser-221 and Ser-224 in the absence of 2-HTP. By contrast, Thr-263 and Thr-264 are phosphorylated only following prior cell treatment with 2-HTP. As to expression, expressed predominantly in hematopoietic tissues. High levels detected in the bone marrow and lower levels in the peripheral leukocytes and lung. Also expressed in brain, heart, muscle, colon, thymus, spleen, kidney, liver, placenta and intestine. Within the leukocyte population expression is higher in neutrophils and eosinophils relative to T- or B-lymphocytes.

It localises to the cell membrane. Its function is as follows. G protein-coupled receptor that responds endogenously to dietary fatty acids or nutrient, specifically medium-chain free fatty acid (FFA) with carbon chain lengths of C9 to C14. Capric acid (C10:0), undecanoic acid (C11:0) and lauric acid (C12:0) are the most potent agonists. In immune cells, functions as a pro-inflammatory receptor via 6-OAU and promotes the expression of pro-inflammatory mediators such as TNFalpha, IL-6 and IL-12B as well as stimulating chemotactic responses through activation of signaling mediators AKT, ERK and NF-kappa-B. In addition, triggers increased bacterial adhesion and phagocytosis in macrophages and regulates pro-inflammatory function via enhancing NLRP3 inflammasome activation. Also plays an important role in inflammation by modulating neutrophil functions. Mechanistically, promotes neutrophil chemotaxis, reactive oxygen species (ROS) production and degranulation via LYN-AKT/ERK pathway. To regulate ROS, communicates with the two formyl peptide receptors FPR2 and FPR1 to control the NADPH oxidase activity in neutrophils. The polypeptide is G-protein coupled receptor 84 (GPR84) (Homo sapiens (Human)).